Reading from the N-terminus, the 533-residue chain is Receptor homology region, transmembrane domain- and RING domain-containing protein 1 (533 aa).

An N-terminal signal peptide occupies residues 1-26 (MNRRRTMLLLICLCATFCLMTQLGAA). The Lumenal segment spans residues 27–167 (NVVLMGTNLT…LPAFENSAWS (141 aa)). N-linked (GlcNAc...) asparagine glycosylation occurs at Asn34. A disulfide bridge links Cys68 with Cys91. The PA domain maps to 84-145 (ALIIRGGCTF…ISKASGEVLK (62 aa)). Residues 168 to 188 (IMAISFISLLAMSAVLATCFF) traverse the membrane as a helical segment. The Cytoplasmic portion of the chain corresponds to 189–533 (VRRHHIRRDR…MASAQSLPGC (345 aa)). The RING-type; atypical zinc finger occupies 236-278 (CAICLEDYNVGEKLRVLPCRHKFHAACVDLWLTTWRTFCPVCK). Disordered regions lie at residues 309 to 329 (SFRSSVAASPPRPISRRPSSQ) and 440 to 476 (LRRCGESGPSLSTMAPQSPQQSQLRHGGESDLNLAGA). Over residues 448–463 (PSLSTMAPQSPQQSQL) the composition is skewed to polar residues.

It is found in the prevacuolar compartment membrane. The protein resides in the protein storage vacuole membrane. Its subcellular location is the golgi apparatus membrane. In terms of biological role, involved in the trafficking of vacuolar proteins. Functions probably as a sorting receptor for protein trafficking to the protein storage vacuole (PSV) by binding the C-terminal vacuolar sorting determinant (VSD) of vacuolar-sorted proteins. In Oryza sativa subsp. japonica (Rice), this protein is Receptor homology region, transmembrane domain- and RING domain-containing protein 1.